The primary structure comprises 191 residues: Ribonuclease HII (191 aa).

One can recognise an RNase H type-2 domain in the interval 7-191 (ILMAGVDEVG…YSPVADLISK (185 aa)). Residues D13, E14, and D103 each contribute to the a divalent metal cation site.

This sequence belongs to the RNase HII family. Mn(2+) serves as cofactor. The cofactor is Mg(2+).

The protein localises to the cytoplasm. It catalyses the reaction Endonucleolytic cleavage to 5'-phosphomonoester.. In terms of biological role, endonuclease that specifically degrades the RNA of RNA-DNA hybrids. The sequence is that of Ribonuclease HII from Legionella pneumophila (strain Paris).